Reading from the N-terminus, the 474-residue chain is P2X purinoceptor 2 (474 aa).

The Cytoplasmic portion of the chain corresponds to 1 to 42; the sequence is MAATHPKAPTAQRLRQGWSAFWDYETPKVIVVRNRPLGVVYR. A helical transmembrane segment spans residues 43-60; that stretch reads AVQLLILLYFVWYVFIVQ. The Extracellular segment spans residues 61 to 333; sequence KSYQDSETGP…IVHGQAGKFS (273 aa). Lysine 77 and lysine 79 together coordinate ATP. 3 disulfide bridges follow: cysteine 121-cysteine 172, cysteine 132-cysteine 155, and cysteine 138-cysteine 166. Asparagine 129 is a glycosylation site (N-linked (GlcNAc...) asparagine). N-linked (GlcNAc...) asparagine glycosylation is present at asparagine 190. Threonine 192 is a binding site for ATP. The cysteines at positions 222 and 232 are disulfide-linked. Residue asparagine 247 is glycosylated (N-linked (GlcNAc...) asparagine). An intrachain disulfide couples cysteine 266 to cysteine 275. Positions 292, 296, and 298 each coordinate ATP. N-linked (GlcNAc...) asparagine glycosylation occurs at asparagine 306. Lysine 315 serves as a coordination point for ATP. A pore-forming motif region spans residues 316–329; that stretch reads AYGIRIDVIVHGQA. Residues 334 to 354 traverse the membrane as a helical segment; the sequence is LIPTIINLATALTSIGVGSFL. Over 355–474 the chain is Cytoplasmic; sequence CDWILLTFMN…PTDPKGLAQL (120 aa). Residues 445–474 form a disordered region; sequence PDRCVGQGLPSSESPLQDSTPTDPKGLAQL. A compositionally biased stretch (polar residues) spans 453 to 466; that stretch reads LPSSESPLQDSTPT.

The protein belongs to the P2X receptor family. Homotrimer and heterotrimer; functional P2XRs are organized as homomeric and heteromeric trimers. Homotrimer. Forms heterodimer with P2RX1. Forms heterotrimer with P2RX6. Forms heterotrimer with P2RX3. As to expression, express in organ of Corti.

The protein resides in the cell membrane. The catalysed reaction is Ca(2+)(in) = Ca(2+)(out). It catalyses the reaction K(+)(in) = K(+)(out). The enzyme catalyses Na(+)(in) = Na(+)(out). Its activity is regulated as follows. Fast activation by external ATP. Exhibits slow desensitization during prolonged ATP activation. Not sensitive to the ATP agonist:alpha/beta-methylene-ATP. In terms of biological role, ATP-gated nonselective transmembrane cation channel permeable to potassium, sodium and calcium. Activation by extracellular ATP induces a variety of cellular responses, such as excitatory postsynaptic responses in sensory neurons, neuromuscular junctions (NMJ) formation, hearing, perception of taste and peristalsis. In the inner ear, regulates sound transduction and auditory neurotransmission, outer hair cell electromotility, inner ear gap junctions, and K(+) recycling. Mediates synaptic transmission between neurons and from neurons to smooth muscle. The chain is P2X purinoceptor 2 (P2RX2) from Cavia porcellus (Guinea pig).